Here is a 290-residue protein sequence, read N- to C-terminus: Enoyl-CoA hydratase, mitochondrial (290 aa).

The transit peptide at 1–27 (MATLRVLLSCVRGPLRPPVRCPAWRPF) directs the protein to the mitochondrion. Phosphothreonine is present on T46. Residue 98 to 101 (ADIK) coordinates substrate. K101 bears the N6-acetyllysine; alternate mark. The residue at position 101 (K101) is an N6-succinyllysine; alternate. S114 is subject to Phosphoserine. An N6-acetyllysine; alternate modification is found at K115. Residue K115 is modified to N6-succinyllysine; alternate. K118 is modified (N6-acetyllysine). G141 lines the substrate pocket. Residue K204 is modified to N6-succinyllysine. K211 is subject to N6-acetyllysine.

This sequence belongs to the enoyl-CoA hydratase/isomerase family. Homohexamer; dimer of trimers.

It localises to the mitochondrion matrix. The catalysed reaction is a (3S)-3-hydroxyacyl-CoA = a (2E)-enoyl-CoA + H2O. It catalyses the reaction a (3E)-enoyl-CoA = a 4-saturated (2E)-enoyl-CoA. It carries out the reaction (3E)-hexenoyl-CoA = (2E)-hexenoyl-CoA. The enzyme catalyses (3S)-3-hydroxybutanoyl-CoA = (2E)-butenoyl-CoA + H2O. The catalysed reaction is 3-hydroxyisovaleryl-CoA = 3-methylbut-2-enoyl-CoA + H2O. It catalyses the reaction 3-hydroxypropanoyl-CoA = acryloyl-CoA + H2O. It carries out the reaction 3-hydroxybutanoyl-CoA = (2E)-butenoyl-CoA + H2O. The enzyme catalyses 2-methylpropenoyl-CoA + H2O = (S)-3-hydroxyisobutanoyl-CoA. The catalysed reaction is (3S)-hydroxyhexanoyl-CoA = (2E)-hexenoyl-CoA + H2O. It catalyses the reaction (3S)-hydroxydecanoyl-CoA = (2E)-decenoyl-CoA + H2O. It functions in the pathway lipid metabolism; fatty acid beta-oxidation. Functionally, converts unsaturated trans-2-enoyl-CoA species ((2E)-enoyl-CoA) to the corresponding (3S)-3-hydroxyacyl-CoA species through addition of a water molecule to the double bond. Catalyzes the hydration of medium- and short-chained fatty enoyl-CoA thioesters from 4 carbons long (C4) up to C16. Has high substrate specificity for crotonyl-CoA ((2E)-butenoyl-CoA) and moderate specificity for acryloyl-CoA, 3-methylcrotonyl-CoA (3-methyl-(2E)-butenoyl-CoA) and methacrylyl-CoA ((2E)-2-methylpropenoyl-CoA). Can bind tiglyl-CoA (2-methylcrotonoyl-CoA), but hydrates only a small amount of this substrate. Plays a key role in the beta-oxidation spiral of short- and medium-chain fatty acid oxidation. At a lower rate than the hydratase reaction, catalyzes the isomerase reaction of trans-3-enoyl-CoA species (such as (3E)-hexenoyl-CoA) to trans-2-enoyl-CoA species (such as (2E)-hexenoyl-CoA), which are subsequently hydrated to 3(S)-3-hydroxyacyl-CoA species (such as (3S)-hydroxyhexanoyl-CoA). The protein is Enoyl-CoA hydratase, mitochondrial (ECHS1) of Pongo abelii (Sumatran orangutan).